The sequence spans 1121 residues: MDFQCRTCSQAYDAEQMMKHLSSTRHKTVFDTSNDEDICCEECQDKNIHQLQIIRFGGEDMVLLCNSCFRKEYSETERPSTSYSLQNGSILKFWEKYVKVRECCCDECGEESNLNANRNGEVLCDKCLPKSNRAKDFVSEKSGRFLYIYLGLNETQNSTRKPRKKGGRRVGRGKKGRKGAKIKKEKKETFEAKISRIAYEVKKENSTIQSSSSSNLRNFKGFKAVESDPVVAAKVSKSETSRSNPGPSNRNKGKGNKANHKKNSGNGIGKEKERKTNIRNNVRNSQPIPEDRKNTNSHVTTNSGGKGKNESVDKHQLPQPKALNGNGSGSTNTTGLKKGKKDHAGQKTKGNDKTGNKNPREAKLNSAGRKNALGKKSNNQPNKGTSRWTIGSDTESSREPSISPNENTTSITKSRNRNKKASKPTLNEKSKTTTMPKKLETKNQEKNNGKTKDGKLIYEEGEPLTRYNTFKSTLSYPDLNTYLNDYSFALFLEQKLENEFVQNFNILWPRNEKDTAFIINVEKNNNSELEKLLPANLLALGRPAFNERQPFFFCTQDEQKVWYIFIKELSIQRGKYVLLVELFSWNNLSLPTKNGSSQFKLLPTSAQTSRILFAMTRITNPKFIDLLLGQKPIKEIYFDNRLKFSSDKLNRSQKTAVEHVLNNSITILQGPPGTGKTSTIEEIIIQVIERFHAFPILCVAASNIAIDNIAEKIMENRPQIKILRILSKKKEQQYSDDHPLGEICLHNIVYKNLSPDMQVVANKTRRGEMISKSEDTKFYKEKNRVTNKVVSQSQIIFTTNIAAGGRELKVIKECPVVIMDEATQSSEASTLVPLSLPGIRNFVFVGDEKQLSSFSNIPQLETSLFERVLSNGTYKNPLMLDTQYRMHPKISEFPIKKIYNGELKDGVTDEQKAWPGVQHPLFFYQCDLGPESRVRSTQRDIVGFTYENKHECVEIVKIIQILMLDKKVPLEEIGVITPYSAQRDLLSDILTKNVVINPKQISMQQEYDEIELFNAAGSQGTAGSLQNNVINIINGLHVATVDSFQGHEKSFIIFSCVRNNTENKIGFLRDKRRLNVALTRAKHGLIVVGNKNVLRKGDPLWKDYITYLEEQEVIFTDLTAY.

The tract at residues 157–187 is disordered; the sequence is NSTRKPRKKGGRRVGRGKKGRKGAKIKKEKK. A compositionally biased stretch (basic residues) spans 160-184; sequence RKPRKKGGRRVGRGKKGRKGAKIKK. Ser-227 carries the post-translational modification Phosphoserine. Residues 233 to 452 form a disordered region; sequence AKVSKSETSR…NQEKNNGKTK (220 aa). Over residues 251 to 263 the composition is skewed to basic residues; the sequence is NKGKGNKANHKKN. Positions 278–287 are enriched in polar residues; that stretch reads IRNNVRNSQP. The segment covering 307-316 has biased composition (basic and acidic residues); that stretch reads GKNESVDKHQ. Over residues 323 to 336 the composition is skewed to low complexity; it reads LNGNGSGSTNTTGL. Positions 342 to 363 are enriched in basic and acidic residues; the sequence is DHAGQKTKGNDKTGNKNPREAK. Over residues 376 to 413 the composition is skewed to polar residues; sequence KSNNQPNKGTSRWTIGSDTESSREPSISPNENTTSITK. A Phosphoserine modification is found at Ser-392. Residues 426 to 452 are compositionally biased toward basic and acidic residues; the sequence is LNEKSKTTTMPKKLETKNQEKNNGKTK. Thr-465 carries the post-translational modification Phosphothreonine. 670–677 provides a ligand contact to ATP; the sequence is GPPGTGKT.

The protein belongs to the DNA2/NAM7 helicase family. As to quaternary structure, interacts with the peptidyl release factors SUP35 and weakly with SUP45.

The protein resides in the cytoplasm. It carries out the reaction ATP + H2O = ADP + phosphate + H(+). Functionally, probable RNA helicase, which may be involved in modulation of the translation termination process. Probably unwinds double-stranded RNA. In vitro, unwinds covalently closed, circular DNA in the presence of a DNA topoisomerase TOP1 and replication factor-A protein RFA1. The chain is Putative ATP-dependent RNA helicase ECM32 (ECM32) from Saccharomyces cerevisiae (strain ATCC 204508 / S288c) (Baker's yeast).